Reading from the N-terminus, the 695-residue chain is Protein-glutamine gamma-glutamyltransferase 2 (695 aa).

Active-site residues include C272, H332, and D355. Residues N395, D397, E434, E444, and E449 each coordinate Ca(2+). Residues 476-482 (SIKHAQP) and 578-581 (ANIP) each bind GTP.

It belongs to the transglutaminase superfamily. Transglutaminase family. In terms of assembly, monomer. It depends on Ca(2+) as a cofactor.

It is found in the cytoplasm. Its subcellular location is the cytosol. It localises to the nucleus. The protein resides in the chromosome. The protein localises to the secreted. It is found in the extracellular space. Its subcellular location is the extracellular matrix. It localises to the cell membrane. The protein resides in the mitochondrion. It catalyses the reaction L-glutaminyl-[protein] + L-lysyl-[protein] = [protein]-L-lysyl-N(6)-5-L-glutamyl-[protein] + NH4(+). The catalysed reaction is L-glutaminyl-[protein] + serotonin = 5-serotonyl-L-glutamyl-[protein] + NH4(+). It carries out the reaction L-glutaminyl-[protein] + dopamine = 5-dopaminyl-L-glutamyl-[protein] + NH4(+). The enzyme catalyses L-glutaminyl-[protein] + histamine = 5-histaminyl-L-glutamyl-[protein] + NH4(+). It catalyses the reaction L-glutaminyl-[protein] + (R)-noradrenaline = 5-(R)-noradrenalinyl-L-glutamyl-[protein] + NH4(+). The catalysed reaction is L-glutaminyl-[protein] + H2O = L-glutamyl-[protein] + NH4(+). Its activity is regulated as follows. Acyltransferase activity is regulated by the binding of GTP and Ca(2+): inactivated by GTP, which stabilizes its closed structure, thereby obstructing the accessibility of substrates to the active sites. In contrast, Ca(2+) acts as a cofactor by inducing conformational change to the active open form. In absence of Ca(2+), Mg(2+) may bind Ca(2+)-binding sites, promoting GTP-binding and subsequent inhibition of the acyltransferase activity. In terms of biological role, calcium-dependent acyltransferase that catalyzes the formation of covalent bonds between peptide-bound glutamine and various primary amines, such as gamma-amino group of peptide-bound lysine, or mono- and polyamines, thereby producing cross-linked or aminated proteins, respectively. Involved in many biological processes, such as bone development, angiogenesis, wound healing, cellular differentiation, chromatin modification and apoptosis. Acts as a protein-glutamine gamma-glutamyltransferase by mediating the cross-linking of proteins: under physiological conditions, the protein cross-linking activity is inhibited by GTP; inhibition is relieved by Ca(2+) in response to various stresses. When secreted, catalyzes cross-linking of proteins of the extracellular matrix, resulting in the formation of scaffolds. Plays a key role during apoptosis, both by (1) promoting the cross-linking of cytoskeletal proteins resulting in condensation of the cytoplasm, and by (2) mediating cross-linking proteins of the extracellular matrix, resulting in the irreversible formation of scaffolds that stabilize the integrity of the dying cells before their clearance by phagocytosis, thereby preventing the leakage of harmful intracellular components. In addition to protein cross-linking, can use different monoamine substrates to catalyze a vast array of protein post-translational modifications: mediates aminylation of serotonin, dopamine, noradrenaline or histamine into glutamine residues of target proteins to generate protein serotonylation, dopaminylation, noradrenalinylation or histaminylation, respectively. Mediates protein serotonylation of small GTPases during activation and aggregation of platelets, leading to constitutive activation of these GTPases. Plays a key role in chromatin organization by mediating serotonylation and dopaminylation of histone H3. Catalyzes serotonylation of 'Gln-5' of histone H3 (H3Q5ser) during serotonergic neuron differentiation, thereby facilitating transcription. Acts as a mediator of neurotransmission-independent role of nuclear dopamine in ventral tegmental area (VTA) neurons: catalyzes dopaminylation of 'Gln-5' of histone H3 (H3Q5dop), thereby regulating relapse-related transcriptional plasticity in the reward system. Also acts as a protein deamidase by mediating the side chain deamidation of specific glutamine residues of proteins to glutamate. May also act as an isopeptidase cleaving the previously formed cross-links. Also able to participate in signaling pathways independently of its acyltransferase activity: acts as a signal transducer in alpha-1 adrenergic receptor-mediated stimulation of phospholipase C-delta (PLCD) activity and is required for coupling alpha-1 adrenergic agonists to the stimulation of phosphoinositide lipid metabolism. The protein is Protein-glutamine gamma-glutamyltransferase 2 of Pagrus major (Red sea bream).